A 982-amino-acid polypeptide reads, in one-letter code: MRVAFIYRWLLCGAAIVNVLVAQRHTASDNPSTYNIGGVLSNSDSEEHFRTTIAHLNFDQQYVPRKVTYYDKTIRMDKNPIKTVFNVCDKLIEKRVYAVVVSHEQTSGDLSPAAVSYTSGFYSIPVIGISSRDAAFSDKNIHVSFLRTVPPYYHQADVWLEMLSHFLYTKVIIIHSSDTDGRAILGRFQTTSQTYYDDVDVRATVELIVEFEPKLESFTEHLIDMKTAQSRVYLMYASTEDAQVIFRDAGEYNMTGEGHVWIVTEQALHANNTPDGVLGLQLEHAHSDKGHIRDSVYVLASAIKEMISNETIAEAPKDCGDSAVNWESGKRLFQYLKSRNITGETGQVAFDDNGDRIYAGYDVINIREHQKQHVVGKFSYDSPRGKMRMRINDSEIIWGGKQKRKPEGIMIPTHLKLLTIEEKPFVYVRRMGDDEFRCEPDERPCPLFNASGATANEFCCRGYCIDLLIELSKRINFTYDLALSPDGQFGHYILRNNSGAMTLRKEWTGLIGELVNERADMIVAPLTINPERAEYIEFSKPFKYQGITILEKKPSRSSTLVSFLQPFSNTLWILVMVSVHVVALVLYLLDRFSPFGRFKLSHSDSNEEKALNLSSAVWFAWGVLLNSGIGEGTPRSFSARVLGMVWAGFAMIIVASYTANLAAFLVLERPKTKLSGINDARLRNTMENLTCATVKGSSVDMYFRRQVELSNMYRTMESNNYVTAEQAIQDVKKGKLMAFIWDSSRLEYEASKDCELVTAGELFGRSGYGIGLQKGSPWTDAVTLAILEFHESGFMEKLDKQWIFHGHVQQNCELFEKTPNTLGLKNMAGVFILVGVGIAGGVGLIIIEVIYKKHQVKKQKRLDIARHAADKWRGTIEKRKTIRASLAMQRQYNVGLMATHAPGTISLAVDKRRYPRLGQRLGPERAWPGDGADVLRIRRPYDLGKGGLTASQLGLGKTRPQQNPLPPRYSPGYTSDVSHLVV.

Residues 1 to 22 (MRVAFIYRWLLCGAAIVNVLVA) form the signal peptide. The Extracellular portion of the chain corresponds to 23–568 (QRHTASDNPS…TLVSFLQPFS (546 aa)). Residues Asn253, Asn309, Asn340, Asn392, Asn449, Asn476, and Asn496 are each glycosylated (N-linked (GlcNAc...) asparagine). Glycine contacts are provided by residues 525-527 (PLT) and Arg532. The chain crosses the membrane as a helical span at residues 569 to 589 (NTLWILVMVSVHVVALVLYLL). Over 590-646 (DRFSPFGRFKLSHSDSNEEKALNLSSAVWFAWGVLLNSGIGEGTPRSFSARVLGMVW) the chain is Cytoplasmic. Residues 647-667 (AGFAMIIVASYTANLAAFLVL) traverse the membrane as a helical segment. Over 668–826 (ERPKTKLSGI…KTPNTLGLKN (159 aa)) the chain is Extracellular. Residue Asn688 is glycosylated (N-linked (GlcNAc...) asparagine). Residues Ser698 and Asp742 each contribute to the glycine site. A helical membrane pass occupies residues 827-847 (MAGVFILVGVGIAGGVGLIII). Topologically, residues 848 to 982 (EVIYKKHQVK…YTSDVSHLVV (135 aa)) are cytoplasmic. Positions 948-982 (LTASQLGLGKTRPQQNPLPPRYSPGYTSDVSHLVV) are disordered. Residues 972–982 (GYTSDVSHLVV) show a composition bias toward polar residues.

It belongs to the glutamate-gated ion channel (TC 1.A.10.1) family. As to quaternary structure, forms a heteromeric NMDA channel with Nmdar2.

The protein resides in the cell membrane. It localises to the postsynaptic cell membrane. It is found in the postsynaptic density. Functionally, NMDA receptor subtype of glutamate-gated ion channels with high calcium permeability and voltage-dependent sensitivity to magnesium. Mediated by glycine. This protein plays a key role in synaptic plasticity, synaptogenesis, excitotoxicity, memory acquisition and learning. It mediates neuronal functions in glutamate neurotransmission. Is involved in the cell surface targeting of NMDA receptors. Plays a role in associative learning and in long-term memory consolidation. The protein is Glutamate [NMDA] receptor subunit 1 of Drosophila grimshawi (Hawaiian fruit fly).